Consider the following 361-residue polypeptide: Homocitrate synthase (361 aa).

One can recognise a Pyruvate carboxyltransferase domain in the interval 1–249; that stretch reads MILDSTLREG…VKKYRLDKLY (249 aa). Arginine 8 contacts 2-oxoglutarate. Glutamate 9 contributes to the Mg(2+) binding site. 2-oxoglutarate contacts are provided by histidine 68, arginine 128, and threonine 162. The Mg(2+) site is built by histidine 188 and histidine 190. Catalysis depends on histidine 282, which acts as the Proton acceptor.

The protein belongs to the alpha-IPM synthase/homocitrate synthase family. Homocitrate synthase LYS20/LYS21 subfamily. Mg(2+) serves as cofactor. Mn(2+) is required as a cofactor.

It catalyses the reaction acetyl-CoA + 2-oxoglutarate + H2O = (2R)-homocitrate + CoA + H(+). The protein operates within amino-acid biosynthesis; L-lysine biosynthesis via AAA pathway; L-alpha-aminoadipate from 2-oxoglutarate: step 1/5. Catalyzes the aldol-type condensation of 2-oxoglutarate with acetyl-CoA to yield homocitrate. Carries out the first step of the alpha-aminoadipate (AAA) lysine biosynthesis pathway. The polypeptide is Homocitrate synthase (Pyrococcus horikoshii (strain ATCC 700860 / DSM 12428 / JCM 9974 / NBRC 100139 / OT-3)).